A 167-amino-acid chain; its full sequence is Signal peptidase complex subunit 2 (167 aa).

Over 1–36 (MPKYNVSDFKSKFDKELTNHFNKNGYKQSFVFEDIR) the chain is Cytoplasmic. Residues 37-57 (LLIAIACIIPAGLAFGIEYVY) form a helical membrane-spanning segment. Residues 58–68 (GFGVLKSYLKY) are Lumenal-facing. The chain crosses the membrane as a helical span at residues 69–89 (LLPLYFLASCLLTFWSSVVKG). Residues 90-167 (STVYVATKKE…ISKYLSQIEN (78 aa)) are Cytoplasmic-facing.

Belongs to the SPCS2 family. Component of the signal peptidase complex (SPC) composed of a catalytic subunit sec11 and three accessory subunits spc1, spc2 and spc3. The complex induces a local thinning of the ER membrane which is used to measure the length of the signal peptide (SP) h-region of protein substrates. This ensures the selectivity of the complex towards h-regions shorter than 18-20 amino acids. SPC associates with the translocon complex.

The protein resides in the endoplasmic reticulum membrane. Functionally, component of the signal peptidase complex (SPC) which catalyzes the cleavage of N-terminal signal sequences from nascent proteins as they are translocated into the lumen of the endoplasmic reticulum. Enhances the enzymatic activity of SPC and facilitates the interactions between different components of the translocation site. The chain is Signal peptidase complex subunit 2 (spc2) from Schizosaccharomyces pombe (strain 972 / ATCC 24843) (Fission yeast).